We begin with the raw amino-acid sequence, 565 residues long: Methionine--tRNA ligase (565 aa).

Positions 16–26 match the 'HIGH' region motif; it reads PYAYGVPHLGN. Residues C148, C151, C161, and C164 each contribute to the Zn(2+) site. The 'KMSKS' region signature appears at 338-342; it reads KFSKS. An ATP-binding site is contributed by K341.

This sequence belongs to the class-I aminoacyl-tRNA synthetase family. MetG type 1 subfamily. Zn(2+) is required as a cofactor.

It localises to the cytoplasm. The enzyme catalyses tRNA(Met) + L-methionine + ATP = L-methionyl-tRNA(Met) + AMP + diphosphate. Functionally, is required not only for elongation of protein synthesis but also for the initiation of all mRNA translation through initiator tRNA(fMet) aminoacylation. This Thermofilum pendens (strain DSM 2475 / Hrk 5) protein is Methionine--tRNA ligase.